The sequence spans 845 residues: Protein P (845 aa).

The interval 1–179 (MPLSYQHFRK…FCGSPYSWEQ (179 aa)) is terminal protein domain (TP). Residues 180–348 (ELHHGRLVIK…YCLSHLVNLL (169 aa)) are spacer. The tract at residues 349–692 (EDWGPCTEHG…YMNLYPVARQ (344 aa)) is polymerase/reverse transcriptase domain (RT). In terms of domain architecture, Reverse transcriptase spans 359–602 (EHHIRIPRTP…YSLNFMGYVI (244 aa)). Mg(2+)-binding residues include Asp-431, Asp-553, and Asp-554.

Belongs to the hepadnaviridae P protein family.

The catalysed reaction is DNA(n) + a 2'-deoxyribonucleoside 5'-triphosphate = DNA(n+1) + diphosphate. It catalyses the reaction Endonucleolytic cleavage to 5'-phosphomonoester.. Activated by host HSP70 and HSP40 in vitro to be able to bind the epsilon loop of the pgRNA. Because deletion of the RNase H region renders the protein partly chaperone-independent, the chaperones may be needed indirectly to relieve occlusion of the RNA-binding site by this domain. Inhibited by several reverse-transcriptase inhibitors: Lamivudine, Adefovir and Entecavir. Functionally, multifunctional enzyme that converts the viral RNA genome into dsDNA in viral cytoplasmic capsids. This enzyme displays a DNA polymerase activity that can copy either DNA or RNA templates, and a ribonuclease H (RNase H) activity that cleaves the RNA strand of RNA-DNA heteroduplexes in a partially processive 3'- to 5'-endonucleasic mode. Neo-synthesized pregenomic RNA (pgRNA) are encapsidated together with the P protein, and reverse-transcribed inside the nucleocapsid. Initiation of reverse-transcription occurs first by binding the epsilon loop on the pgRNA genome, and is initiated by protein priming, thereby the 5'-end of (-)DNA is covalently linked to P protein. Partial (+)DNA is synthesized from the (-)DNA template and generates the relaxed circular DNA (RC-DNA) genome. After budding and infection, the RC-DNA migrates in the nucleus, and is converted into a plasmid-like covalently closed circular DNA (cccDNA). The activity of P protein does not seem to be necessary for cccDNA generation, and is presumably released from (+)DNA by host nuclear DNA repair machinery. This Homo sapiens (Human) protein is Protein P.